Consider the following 876-residue polypeptide: Leucine--tRNA ligase (876 aa).

The 'HIGH' region motif lies at 42–52 (PYPSGKLHMGH). Positions 634–638 (KMSKS) match the 'KMSKS' region motif. K637 is a binding site for ATP.

It belongs to the class-I aminoacyl-tRNA synthetase family.

The protein resides in the cytoplasm. It catalyses the reaction tRNA(Leu) + L-leucine + ATP = L-leucyl-tRNA(Leu) + AMP + diphosphate. This chain is Leucine--tRNA ligase, found in Neisseria meningitidis serogroup C / serotype 2a (strain ATCC 700532 / DSM 15464 / FAM18).